Consider the following 319-residue polypeptide: Urease accessory protein UreD (319 aa).

The tract at residues 254–273 is disordered; sequence PDPVGSPAARRESVPAKRAE. Over residues 262–273 the composition is skewed to basic and acidic residues; it reads ARRESVPAKRAE.

It belongs to the UreD family. In terms of assembly, ureD, UreF and UreG form a complex that acts as a GTP-hydrolysis-dependent molecular chaperone, activating the urease apoprotein by helping to assemble the nickel containing metallocenter of UreC. The UreE protein probably delivers the nickel.

The protein resides in the cytoplasm. Required for maturation of urease via the functional incorporation of the urease nickel metallocenter. This chain is Urease accessory protein UreD, found in Frankia casuarinae (strain DSM 45818 / CECT 9043 / HFP020203 / CcI3).